The primary structure comprises 125 residues: uncharacterized protein (125 aa).

This sequence belongs to the anhydro-N-acetylmuramic acid kinase family.

This is an uncharacterized protein from Yersinia enterocolitica.